Reading from the N-terminus, the 203-residue chain is Cilia- and flagella-associated protein 20 (203 aa).

The protein belongs to the CFAP20 family.

The protein resides in the nucleus. It is found in the cytoplasm. It localises to the cytoskeleton. Its subcellular location is the microtubule organizing center. The protein localises to the centrosome. The protein resides in the centriole. It is found in the cilium basal body. It localises to the cilium axoneme. Functionally, cilium- and flagellum-specific protein that plays a role in axonemal structure organization and motility. Microtubule inner protein (MIP) part of the dynein-decorated doublet microtubules (DMTs) in cilia axoneme, which is required for motile cilia beating. Involved in the regulation of the size and morphology of cilia. Required for axonemal microtubules polyglutamylation. The polypeptide is Cilia- and flagella-associated protein 20 (Caenorhabditis elegans).